Here is a 120-residue protein sequence, read N- to C-terminus: Ig heavy chain V region AC38 15.3 (120 aa).

The segment at 1 to 98 (QVQLLQPGTE…EDSAVYYCAR (98 aa)) is v segment. An intrachain disulfide couples cysteine 22 to cysteine 96. Residues 99–105 (WDYEGDR) form a d segment region. Residues 106–120 (YFDVWGTGTTVTVSS) form a j segment region.

The chain is Ig heavy chain V region AC38 15.3 from Mus musculus (Mouse).